The chain runs to 431 residues: Helix-loop-helix protein 11 (431 aa).

The tract at residues 88–109 is disordered; the sequence is LANRSLSQPAPLSPTSLDPDRR. Over residues 91 to 103 the composition is skewed to polar residues; the sequence is RSLSQPAPLSPTS. Positions 112-163 constitute a bHLH domain; the sequence is MRRQIANCNERRRMQSINAGFLALRALLPRKEGEKLSKAAILQQTADMVHQL. Polar residues-rich tracts occupy residues 226 to 241 and 248 to 257; these read TTTSSQASSPVTPRSN and LPSSYASSAL. The interval 226 to 311 is disordered; it reads TTTSSQASSP…PPPTLPSLET (86 aa). Residues 274 to 291 show a composition bias toward low complexity; the sequence is TTSTPLSLLTLNGSPTSS.

In terms of tissue distribution, expressed in the pharynx, nerve cords, the H-shaped excretory cell, vulva muscles, and the anal depressor (at protein level). Expressed in the intestine (at protein level). In males, it is also expressed in the spicules and hyp7 cells of the hypodermis (at protein level).

It is found in the nucleus. Functionally, transcriptional regulator. Component of a feedback loop involving atfs-1, atgl-1 and hlh-11. Binds to the promoter of the atgl-1 lipase to negatively regulate the expression of atgl-1, and thereby promoting fat oxidation in response to mitochondrial stress and mitochondrial respiration in the intestine. In addition, functions with atfs-1 to maintain lifespan. May have a role in fertility and in positively regulating body size. The chain is Helix-loop-helix protein 11 from Caenorhabditis elegans.